A 96-amino-acid chain; its full sequence is Transcriptional regulator ATRY (96 aa).

Residues Val-1 to Gln-12 form a GATA-type; atypical zinc finger. Residues Val-1–Asn-96 enclose the ADD domain. A PHD-type; atypical zinc finger spans residues Leu-27–Pro-82.

The protein belongs to the SNF2/RAD54 helicase family. Expressed in developing and adult testis. Also weakly expressed in prostate and epididymis.

Its subcellular location is the nucleus. It carries out the reaction ATP + H2O = ADP + phosphate + H(+). Its function is as follows. Could be a global transcriptional regulator. Modifies gene expression by affecting chromatin. This is Transcriptional regulator ATRY (ATRY) from Notamacropus eugenii (Tammar wallaby).